The sequence spans 83 residues: Defensin-1 (83 aa).

An N-terminal signal peptide occupies residues 1–33; the sequence is MAGKGVGSRLSTLFLLVLLVITIGMMQVQVAEG. 4 disulfide bridges follow: C36/C82, C47/C67, C53/C76, and C57/C78.

The protein belongs to the DEFL family.

The protein localises to the secreted. Functionally, plant defense peptide. Has antifungal activity against B.cinera, F.oxysporum, F.solani and H.annosum with IC(50) values of 0.4 ug/ml, 2.9 ug/ml, 0.9 ug/ml and 1.4 ug/ml, respectively. Has modest antifungal activity against C.albicans and T.reesei. Causes thickening of F.oxysporum hyphae and an increase in their branching. Lacks antibacterial activity against the Gram-negative bacteria E.coli and E.carotovora. The protein is Defensin-1 of Pinus sylvestris (Scotch pine).